The primary structure comprises 195 residues: dTTP/UTP pyrophosphatase (195 aa).

Asp76 (proton acceptor) is an active-site residue.

The protein belongs to the Maf family. YhdE subfamily. A divalent metal cation serves as cofactor.

It is found in the cytoplasm. It carries out the reaction dTTP + H2O = dTMP + diphosphate + H(+). The enzyme catalyses UTP + H2O = UMP + diphosphate + H(+). In terms of biological role, nucleoside triphosphate pyrophosphatase that hydrolyzes dTTP and UTP. May have a dual role in cell division arrest and in preventing the incorporation of modified nucleotides into cellular nucleic acids. The protein is dTTP/UTP pyrophosphatase of Shewanella frigidimarina (strain NCIMB 400).